We begin with the raw amino-acid sequence, 194 residues long: Myelin-associated neurite-outgrowth inhibitor (194 aa).

The residue at position 1 (M1) is an N-acetylmethionine. Topologically, residues 1-18 (MNPVYSPGSSGVPYANAK) are cytoplasmic. S6 is modified (phosphoserine). The helical transmembrane segment at 19-41 (GIGYPAGFPVGYAAAPAYSPNMY) threads the bilayer. Topologically, residues 42 to 141 (PGANPTFQTG…PAPIPPPRGS (100 aa)) are extracellular. N-linked (GlcNAc...) asparagine glycosylation is present at N45. Residues 142 to 163 (GVTMGMVAGTTMAMSAGTLLTA) form a helical membrane-spanning segment. Residues 164 to 194 (HSPTPVAPHPVTVPTYRAPGTPTYSYVPPQW) lie on the Cytoplasmic side of the membrane.

This sequence belongs to the FAM168 family. As to quaternary structure, may form homodimers. May interact with DAZAP2, FAM168A, PRDX6, RBM6, TMTC1 and YPEL2. Interacts with CDC27. N-glycosylated. In terms of tissue distribution, predominantly expressed in the brain, including olfactory bulb, cortex and cerebellum (at protein level).

The protein localises to the cytoplasm. The protein resides in the perinuclear region. It is found in the cell membrane. It localises to the cell projection. Its subcellular location is the axon. Inhibitor of neuronal axonal outgrowth. Acts as a negative regulator of CDC42 and STAT3 and a positive regulator of STMN2. Positive regulator of CDC27. This Mus musculus (Mouse) protein is Myelin-associated neurite-outgrowth inhibitor (Fam168b).